The primary structure comprises 343 residues: DNA-directed RNA polymerase subunit alpha (343 aa).

Residues 1-236 form an alpha N-terminal domain (alpha-NTD) region; it reads MQEHYYKFWR…EQLQIFLTFD (236 aa). The alpha C-terminal domain (alpha-CTD) stretch occupies residues 253-343; sequence LNENLFRSVD…QPPQKRETQQ (91 aa).

Belongs to the RNA polymerase alpha chain family. Homodimer. The RNAP catalytic core consists of 2 alpha, 1 beta, 1 beta' and 1 omega subunit. When a sigma factor is associated with the core the holoenzyme is formed, which can initiate transcription.

The enzyme catalyses RNA(n) + a ribonucleoside 5'-triphosphate = RNA(n+1) + diphosphate. DNA-dependent RNA polymerase catalyzes the transcription of DNA into RNA using the four ribonucleoside triphosphates as substrates. The polypeptide is DNA-directed RNA polymerase subunit alpha (Bdellovibrio bacteriovorus (strain ATCC 15356 / DSM 50701 / NCIMB 9529 / HD100)).